The primary structure comprises 317 residues: Xylose/arabinose import permease protein XacH (317 aa).

The next 6 helical transmembrane spans lie at 40–60, 98–118, 132–152, 179–199, 241–261, and 290–310; these read GIPFVLMSIAVYGGTGYNFAI, LVLLVGFTTICLVLGLFLAIL, VYLLPMSLSFVVTAQLWLWMF, IALGAVILALIWQFSGYTMVV, AAVVLMVFALKAFTFLYALVG, and AAIATMLLIMALGVIGPYLYY. The ABC transmembrane type-1 domain maps to 94-309; it reads AQNNLVLLVG…ALGVIGPYLY (216 aa).

This sequence belongs to the binding-protein-dependent transport system permease family. In terms of assembly, the complex is composed of two ATP-binding proteins (XacJ and XacK), two transmembrane proteins (XacH and XacI) and a solute-binding protein (XacG).

The protein localises to the cell membrane. Functionally, part of the ABC transporter complex XacGHIJK involved in the uptake of xylose and arabinose. Responsible for the translocation of the substrate across the membrane. The sequence is that of Xylose/arabinose import permease protein XacH from Haloferax volcanii (strain ATCC 29605 / DSM 3757 / JCM 8879 / NBRC 14742 / NCIMB 2012 / VKM B-1768 / DS2) (Halobacterium volcanii).